A 177-amino-acid polypeptide reads, in one-letter code: MSDMTTIARPYAKAAFDFAVENGELAQWAEMLTFASEVVKNEAMQDILRSGFSADKLTEIIVSVCDEQLNEFGQNLLKVMAENGRLTMVPAVSDEFLFLKNEHEKTIEADVISAVVLEDSQLVAISQKLEQRLERKVKLNCSVDETLIAGVVIRAGDLVIDNSVRGKLNRLSDTLQS.

The protein belongs to the ATPase delta chain family. In terms of assembly, F-type ATPases have 2 components, F(1) - the catalytic core - and F(0) - the membrane proton channel. F(1) has five subunits: alpha(3), beta(3), gamma(1), delta(1), epsilon(1). F(0) has three main subunits: a(1), b(2) and c(10-14). The alpha and beta chains form an alternating ring which encloses part of the gamma chain. F(1) is attached to F(0) by a central stalk formed by the gamma and epsilon chains, while a peripheral stalk is formed by the delta and b chains.

Its subcellular location is the cell inner membrane. Functionally, f(1)F(0) ATP synthase produces ATP from ADP in the presence of a proton or sodium gradient. F-type ATPases consist of two structural domains, F(1) containing the extramembraneous catalytic core and F(0) containing the membrane proton channel, linked together by a central stalk and a peripheral stalk. During catalysis, ATP synthesis in the catalytic domain of F(1) is coupled via a rotary mechanism of the central stalk subunits to proton translocation. In terms of biological role, this protein is part of the stalk that links CF(0) to CF(1). It either transmits conformational changes from CF(0) to CF(1) or is implicated in proton conduction. The chain is ATP synthase subunit delta 1 from Photobacterium profundum (strain SS9).